A 379-amino-acid chain; its full sequence is Junctional adhesion molecule-like (379 aa).

An N-terminal signal peptide occupies residues Met-1 to Pro-20. Topologically, residues Gln-21–Leu-281 are extracellular. 2 Ig-like V-type domains span residues Pro-24–Glu-135 and Pro-140–Val-250. An intrachain disulfide couples Cys-45 to Cys-119. 3 N-linked (GlcNAc...) asparagine glycosylation sites follow: Asn-79, Asn-89, and Asn-125. A disulfide bond links Cys-158 and Cys-236. The helical transmembrane segment at Val-282–Val-302 threads the bilayer. Over Lys-303–Lys-379 the chain is Cytoplasmic. Residue Tyr-355 is modified to Phosphotyrosine.

The protein belongs to the immunoglobulin superfamily. As to quaternary structure, homodimer; active form in leukocyte-endothelial cell adhesion. Interacts (homodimeric form) with CXADR. Interacts (via cytoplasmic domain) with the PI3 kinase; upon CXADR-binding. Interacts with ITGA4 and ITGB1; integrin alpha-4/beta-1 may regulate leukocyte to endothelial cells adhesion by controlling JAML homodimerization. As to expression, expressed by gamma-delta intraepithelial T cells (at protein level).

It localises to the cell membrane. Its subcellular location is the cell junction. Transmembrane protein of the plasma membrane of leukocytes that control their migration and activation through interaction with CXADR, a plasma membrane receptor found on adjacent epithelial and endothelial cells. The interaction between both receptors mediates the activation of gamma-delta T-cells, a subpopulation of T-cells residing in epithelia and involved in tissue homeostasis and repair. Upon epithelial CXADR-binding, JAML induces downstream cell signaling events in gamma-delta T-cells through PI3-kinase and MAP kinases. It results in proliferation and production of cytokines and growth factors by T-cells that in turn stimulate epithelial tissues repair. It also controls the transmigration of leukocytes within epithelial and endothelial tissues through adhesive interactions with epithelial and endothelial CXADR. The protein is Junctional adhesion molecule-like of Mus musculus (Mouse).